The chain runs to 375 residues: o-succinylbenzoate synthase (375 aa).

Lysine 166 serves as the catalytic Proton donor. Mg(2+) is bound by residues aspartate 191, glutamate 216, and aspartate 241. The Proton acceptor role is filled by lysine 265.

This sequence belongs to the mandelate racemase/muconate lactonizing enzyme family. MenC type 2 subfamily. In terms of assembly, homotetramer. Requires a divalent metal cation as cofactor.

The enzyme catalyses (1R,6R)-6-hydroxy-2-succinyl-cyclohexa-2,4-diene-1-carboxylate = 2-succinylbenzoate + H2O. It catalyses the reaction N-acetyl-D-methionine = N-acetyl-L-methionine. It carries out the reaction N-acetyl-D-phenylalanine = N-acetyl-L-phenylalanine. Its pathway is quinol/quinone metabolism; 1,4-dihydroxy-2-naphthoate biosynthesis; 1,4-dihydroxy-2-naphthoate from chorismate: step 4/7. The protein operates within quinol/quinone metabolism; menaquinone biosynthesis. In terms of biological role, converts 2-succinyl-6-hydroxy-2,4-cyclohexadiene-1-carboxylate (SHCHC) to 2-succinylbenzoate (OSB). Also acts as a N-succinylamino acid racemase (NSAR) that catalyzes the racemization of various N-succinylamino acids, including N-succinyl-alanine and N-succinyl-phenylalanine. Can catalyze the racemization of a broad range of N-acylamino acids, including N-acetyl-methionine, N-acetyl-phenylalanine, N-carbamoyl-methionine, N-formyl-D-methionine, N-formyl-D-norleucine and N-carbamoyl-D-norleucine. May be a bifunctional enzyme involved in menaquinone biosynthesis and in an irreversible pathway for the conversion of D- to L-amino acids, thereby facilitating the survival and/or growth of the organism. This is o-succinylbenzoate synthase from Geobacillus kaustophilus.